Reading from the N-terminus, the 124-residue chain is Small ribosomal subunit protein uS12cz/uS12cy (124 aa).

The protein belongs to the universal ribosomal protein uS12 family. Part of the 30S ribosomal subunit.

Its subcellular location is the plastid. It localises to the chloroplast. With S4 and S5 plays an important role in translational accuracy. Located at the interface of the 30S and 50S subunits. The protein is Small ribosomal subunit protein uS12cz/uS12cy (rps12-A) of Zea mays (Maize).